Consider the following 288-residue polypeptide: Quinate/shikimate dehydrogenase (288 aa).

Positions 71 and 107 each coordinate substrate. NAD(+)-binding positions include 132-135 (AGGA), 155-158 (NRRD), K205, 232-235 (CVYN), and G255.

It belongs to the shikimate dehydrogenase family. Homodimer.

It carries out the reaction L-quinate + NAD(+) = 3-dehydroquinate + NADH + H(+). The catalysed reaction is L-quinate + NADP(+) = 3-dehydroquinate + NADPH + H(+). It catalyses the reaction shikimate + NADP(+) = 3-dehydroshikimate + NADPH + H(+). The enzyme catalyses shikimate + NAD(+) = 3-dehydroshikimate + NADH + H(+). Its pathway is metabolic intermediate biosynthesis; chorismate biosynthesis; chorismate from D-erythrose 4-phosphate and phosphoenolpyruvate: step 4/7. The actual biological function of YdiB remains unclear, nor is it known whether 3-dehydroshikimate or quinate represents the natural substrate. Catalyzes the reversible NAD-dependent reduction of both 3-dehydroshikimate (DHSA) and 3-dehydroquinate to yield shikimate (SA) and quinate, respectively. It can use both NAD or NADP for catalysis, however it has higher catalytic efficiency with NAD. In Escherichia coli O1:K1 / APEC, this protein is Quinate/shikimate dehydrogenase.